The primary structure comprises 133 residues: Large ribosomal subunit protein bL20 (133 aa).

It belongs to the bacterial ribosomal protein bL20 family.

Functionally, binds directly to 23S ribosomal RNA and is necessary for the in vitro assembly process of the 50S ribosomal subunit. It is not involved in the protein synthesizing functions of that subunit. In Rubrobacter xylanophilus (strain DSM 9941 / JCM 11954 / NBRC 16129 / PRD-1), this protein is Large ribosomal subunit protein bL20.